Reading from the N-terminus, the 349-residue chain is 5-deoxyribose 1-phosphate isomerase (349 aa).

Substrate is bound by residues R49–A51, R92, and Q199. D240 acts as the Proton donor in catalysis. N250–K251 is a binding site for substrate.

It belongs to the EIF-2B alpha/beta/delta subunits family. DrdI subfamily.

It carries out the reaction 5-deoxy-alpha-D-ribose 1-phosphate = 5-deoxy-D-ribulose 1-phosphate. It participates in carbohydrate degradation. In terms of biological role, catalyzes the isomerization of 5-deoxy-alpha-D-ribose 1-phosphate to 5-deoxy-D-ribulose 1-phosphate, as part of a 5-deoxyribose salvage pathway that recycles this toxic radical SAM enzyme by-product to mainstream metabolites. The protein is 5-deoxyribose 1-phosphate isomerase of Clostridium botulinum (strain Kyoto / Type A2).